A 572-amino-acid polypeptide reads, in one-letter code: Putative inorganic phosphate transporter C8E4.01c (572 aa).

Topologically, residues 1 to 47 (MAFGSKILNIGSKSDEYNDDAVPLDQVEEGAQERRYYLGLTKREFKL) are cytoplasmic. Residues Ser-12 and Ser-14 each carry the phosphoserine modification. A helical transmembrane segment spans residues 48–68 (MMLAGVGFFLDSYDLFIINLV). Residues 69–99 (TPIFEYLYWGGIEKGPTGKGHYPSGIRGLVN) are Extracellular-facing. The helical transmembrane segment at 100-120 (ASANIGNIFGQLLFGFMGDFF) threads the bilayer. At 121-123 (GRK) the chain is on the cytoplasmic side. The helical transmembrane segment at 124-144 (FVYGKEMVIVIIATVLVIAMP) threads the bilayer. At 145–153 (KSIHSPLSK) the chain is on the extracellular side. The chain crosses the membrane as a helical span at residues 154–174 (MMWVFCWRWLLGVGIGGDYPM). Residues 175-193 (SAAITSERSKIKRRGTLIS) lie on the Cytoplasmic side of the membrane. Residues 194-214 (LIFAFQGFGTLAGAIVTIILL) traverse the membrane as a helical segment. The Extracellular portion of the chain corresponds to 215–229 (GCFEHPLNREGHYHK). Residues 230 to 250 (LEGVWRLQFGLALVPAIGVLI) form a helical membrane-spanning segment. Residues 251–346 (PRLIMKESKS…TYFRQWRHFK (96 aa)) are Cytoplasmic-facing. A disordered region spans residues 265–297 (KALNSAEGKDPKAFFNTDDEDNMKKSSSHGDSE). Positions 286-296 (NMKKSSSHGDS) are enriched in basic and acidic residues. Phosphoserine is present on residues Ser-292 and Ser-296. The chain crosses the membrane as a helical span at residues 347 to 367 (HLLGTSVCWFLLDIAFYGVNL). The Extracellular segment spans residues 368-395 (NQSVILKNIGFSTGTNEYRTLMKNAIGN). Residues 396–416 (LIIAVAGYVPGYWFNVFLVEI) traverse the membrane as a helical segment. Over 417 to 420 (LGRK) the chain is Cytoplasmic. The helical transmembrane segment at 421–441 (WIQLQGFVITGLMFAILAGRW) threads the bilayer. At 442-449 (NEISTGGR) the chain is on the extracellular side. The chain crosses the membrane as a helical span at residues 450 to 470 (FACFVIAQLFSNFGPNSTTFI). Topologically, residues 471–485 (YPAEVFPARVRGTAH) are cytoplasmic. Residues 486-506 (GVSAALGKCGAILASLLFNFL) form a helical membrane-spanning segment. Residues 507-508 (TG) lie on the Extracellular side of the membrane. Residues 509 to 529 (VIGYGNVMWIFCGCMWGGILF) form a helical membrane-spanning segment. Over 530-572 (TLLLPETKGRDADEIDRLELFYGKDGKVQCDSKWKSWYFNGIF) the chain is Cytoplasmic.

This sequence belongs to the major facilitator superfamily. Sugar transporter (TC 2.A.1.1) family.

Its subcellular location is the membrane. High-affinity transporter for external inorganic phosphate. This Schizosaccharomyces pombe (strain 972 / ATCC 24843) (Fission yeast) protein is Putative inorganic phosphate transporter C8E4.01c.